The chain runs to 341 residues: MRVLGIESSCDETGVAVYDTGLSGSAALRAHAVYSQIALHAEYGGVVPELASRDHVRKLLPLVRQTLAEAGLGVGDIDGVAYTAGPGLVGALLVGAGVARSLAWALEVPAVGVHHMEGHLLAPLMEDDPPEAPFVALLVSGGHTQLVAVDAIGQYRLLGETLDDAAGEAFDKTAKLMGLPYPGGPQLARLAEQGTPGAYRFARPMTDRPGLDFSFSGLKTQVLMAWRDSDQSEQTRADIARGFEDAVVETLSIKCERALEAAGTNVIVVAGGVGANKRLRARLQQMAERLGGRACFPRPALCTDNGAMIAFAGALRLQAGQYSPPKVDVTPRWDMATLPAV.

Fe cation-binding residues include His-115 and His-119. Substrate is bound by residues 138-142, Asp-171, Gly-184, and Asn-276; that span reads LVSGG. Residue Asp-304 participates in Fe cation binding.

It belongs to the KAE1 / TsaD family. Requires Fe(2+) as cofactor.

Its subcellular location is the cytoplasm. It catalyses the reaction L-threonylcarbamoyladenylate + adenosine(37) in tRNA = N(6)-L-threonylcarbamoyladenosine(37) in tRNA + AMP + H(+). Required for the formation of a threonylcarbamoyl group on adenosine at position 37 (t(6)A37) in tRNAs that read codons beginning with adenine. Is involved in the transfer of the threonylcarbamoyl moiety of threonylcarbamoyl-AMP (TC-AMP) to the N6 group of A37, together with TsaE and TsaB. TsaD likely plays a direct catalytic role in this reaction. This chain is tRNA N6-adenosine threonylcarbamoyltransferase, found in Stenotrophomonas maltophilia (strain K279a).